Consider the following 505-residue polypeptide: Glutamate--tRNA ligase (505 aa).

The short motif at 12–22 (PSPTGDPHVGT) is the 'HIGH' region element. The 'KMSKS' region signature appears at 253–257 (KLSKR). K256 contacts ATP.

The protein belongs to the class-I aminoacyl-tRNA synthetase family. Glutamate--tRNA ligase type 1 subfamily. As to quaternary structure, monomer.

Its subcellular location is the cytoplasm. The enzyme catalyses tRNA(Glu) + L-glutamate + ATP = L-glutamyl-tRNA(Glu) + AMP + diphosphate. Its function is as follows. Catalyzes the attachment of glutamate to tRNA(Glu) in a two-step reaction: glutamate is first activated by ATP to form Glu-AMP and then transferred to the acceptor end of tRNA(Glu). The polypeptide is Glutamate--tRNA ligase (Chlamydia caviae (strain ATCC VR-813 / DSM 19441 / 03DC25 / GPIC) (Chlamydophila caviae)).